The following is an 865-amino-acid chain: Protein translocase subunit SecA (865 aa).

Residues glutamine 85, 103–107 (GEGKT), and aspartate 505 contribute to the ATP site. Zn(2+)-binding residues include cysteine 847, cysteine 849, cysteine 858, and histidine 859.

This sequence belongs to the SecA family. As to quaternary structure, monomer and homodimer. Part of the essential Sec protein translocation apparatus which comprises SecA, SecYEG and auxiliary proteins SecDF. Other proteins may also be involved. Zn(2+) is required as a cofactor.

The protein resides in the cell membrane. It localises to the cytoplasm. It catalyses the reaction ATP + H2O + cellular proteinSide 1 = ADP + phosphate + cellular proteinSide 2.. Part of the Sec protein translocase complex. Interacts with the SecYEG preprotein conducting channel. Has a central role in coupling the hydrolysis of ATP to the transfer of proteins into and across the cell membrane, serving as an ATP-driven molecular motor driving the stepwise translocation of polypeptide chains across the membrane. The chain is Protein translocase subunit SecA from Lactococcus lactis subsp. lactis (strain IL1403) (Streptococcus lactis).